Consider the following 88-residue polypeptide: Elongation factor 1-beta (88 aa).

The protein belongs to the EF-1-beta/EF-1-delta family.

Promotes the exchange of GDP for GTP in EF-1-alpha/GDP, thus allowing the regeneration of EF-1-alpha/GTP that could then be used to form the ternary complex EF-1-alpha/GTP/AAtRNA. The protein is Elongation factor 1-beta (ef1b) of Thermoplasma volcanium (strain ATCC 51530 / DSM 4299 / JCM 9571 / NBRC 15438 / GSS1).